Here is a 261-residue protein sequence, read N- to C-terminus: ATP synthase subunit a (261 aa).

Transmembrane regions (helical) follow at residues 31–51 (IAFTNSAMWMVVTLAALLIFM), 64–84 (WQAAVESFTGFVAGMMATNIG), 97–117 (LFMFILIANIMGMMPTGVVGV), 126–146 (LTVTGVLAVISFSIVLVVGFW), 166–188 (IPMIFVIELFSFLIRPFSLGLRL), 201–223 (VLAGFVINGINAGALTVAIVSIP), and 235–255 (ELLVCAIQAYVFALLTSLYLN).

The protein belongs to the ATPase A chain family. In terms of assembly, F-type ATPases have 2 components, CF(1) - the catalytic core - and CF(0) - the membrane proton channel. CF(1) has five subunits: alpha(3), beta(3), gamma(1), delta(1), epsilon(1). CF(0) has three main subunits: a(1), b(2) and c(9-12). The alpha and beta chains form an alternating ring which encloses part of the gamma chain. CF(1) is attached to CF(0) by a central stalk formed by the gamma and epsilon chains, while a peripheral stalk is formed by the delta and b chains.

Its subcellular location is the cell inner membrane. In terms of biological role, key component of the proton channel; it plays a direct role in the translocation of protons across the membrane. This Rhizorhabdus wittichii (strain DSM 6014 / CCUG 31198 / JCM 15750 / NBRC 105917 / EY 4224 / RW1) (Sphingomonas wittichii) protein is ATP synthase subunit a.